Consider the following 143-residue polypeptide: uncharacterized protein (143 aa).

It is found in the mitochondrion. This is an uncharacterized protein from Arabidopsis thaliana (Mouse-ear cress).